We begin with the raw amino-acid sequence, 252 residues long: tRNA (guanine-N(1)-)-methyltransferase (252 aa).

S-adenosyl-L-methionine is bound by residues Gly-113 and 133–138 (IGDYVL). A compositionally biased stretch (low complexity) spans 229–238 (VARPAANAPA). The tract at residues 229–252 (VARPAANAPAKGESQKTPKNKTDG) is disordered. The segment covering 241–252 (ESQKTPKNKTDG) has biased composition (basic and acidic residues).

It belongs to the RNA methyltransferase TrmD family. As to quaternary structure, homodimer.

It is found in the cytoplasm. It carries out the reaction guanosine(37) in tRNA + S-adenosyl-L-methionine = N(1)-methylguanosine(37) in tRNA + S-adenosyl-L-homocysteine + H(+). In terms of biological role, specifically methylates guanosine-37 in various tRNAs. This chain is tRNA (guanine-N(1)-)-methyltransferase, found in Rhodopseudomonas palustris (strain HaA2).